The following is a 32-amino-acid chain: Cytochrome b6-f complex subunit 6 (32 aa).

The chain crosses the membrane as a helical span at residues 6–26 (VFYIVFIALFFGIAVGIIFAI).

The protein belongs to the PetL family. In terms of assembly, the 4 large subunits of the cytochrome b6-f complex are cytochrome b6, subunit IV (17 kDa polypeptide, PetD), cytochrome f and the Rieske protein, while the 4 small subunits are PetG, PetL, PetM and PetN. The complex functions as a dimer.

It is found in the cellular thylakoid membrane. Component of the cytochrome b6-f complex, which mediates electron transfer between photosystem II (PSII) and photosystem I (PSI), cyclic electron flow around PSI, and state transitions. PetL is important for photoautotrophic growth as well as for electron transfer efficiency and stability of the cytochrome b6-f complex. The protein is Cytochrome b6-f complex subunit 6 of Mastigocladus laminosus (Fischerella sp.).